The chain runs to 499 residues: Phenylalanine--tRNA ligase alpha subunit B (499 aa).

L-phenylalanine contacts are provided by residues Thr-330, 373–375 (QIE), and Tyr-413. Mg(2+) is bound at residue Glu-415. Phe-439 serves as a coordination point for L-phenylalanine.

Belongs to the class-II aminoacyl-tRNA synthetase family. Phe-tRNA synthetase alpha subunit type 2 subfamily. As to quaternary structure, heterotetramer; dimer of two heterodimers formed by alpha and beta subunits. Mg(2+) is required as a cofactor.

The protein localises to the cytoplasm. The enzyme catalyses tRNA(Phe) + L-phenylalanine + ATP = L-phenylalanyl-tRNA(Phe) + AMP + diphosphate + H(+). This chain is Phenylalanine--tRNA ligase alpha subunit B (farsa-b), found in Xenopus laevis (African clawed frog).